A 229-amino-acid polypeptide reads, in one-letter code: (S)-2-haloacid dehalogenase 2 (229 aa).

The active-site Nucleophile is the Asp-10. An (S)-2-haloacid-binding positions include 11–12, Arg-41, and 118–119; these read LY and SN. The important for catalytic activity stretch occupies residues 175 to 180; sequence SSNAWD.

This sequence belongs to the HAD-like hydrolase superfamily. S-2-haloalkanoic acid dehalogenase family.

The enzyme catalyses an (S)-2-haloacid + H2O = a (2R)-2-hydroxycarboxylate + a halide anion + H(+). It carries out the reaction (S)-2-chloropropanoate + H2O = (R)-lactate + chloride + H(+). Functionally, catalyzes the hydrolytic dehalogenation of small (S)-2-haloalkanoic acids to yield the corresponding (R)-2-hydroxyalkanoic acids. Acts on acids of short chain lengths, C(2) to C(4), with inversion of configuration at C-2. Active with 2-halogenated carboxylic acids and converts only the S-isomer (or L-isomer) of 2-chloropropionic acid with inversion of configuration to produce R-lactate (or D-isomer). The chain is (S)-2-haloacid dehalogenase 2 from Pseudomonas sp. (strain CBS-3).